Reading from the N-terminus, the 497-residue chain is Cytochrome P450 71A14 (497 aa).

The helical transmembrane segment at 3-23 (MIIISLCLATILALLLLKQFL) threads the bilayer. Position 440 (Cys440) interacts with heme.

The protein belongs to the cytochrome P450 family. The cofactor is heme.

The protein resides in the membrane. The chain is Cytochrome P450 71A14 (CYP71A14) from Arabidopsis thaliana (Mouse-ear cress).